The following is a 358-amino-acid chain: Probable tartrate dehydrogenase/decarboxylase TtuC' (358 aa).

Asp222, Asp246, and Asp250 together coordinate Mn(2+).

It belongs to the isocitrate and isopropylmalate dehydrogenases family. Mg(2+) serves as cofactor. Mn(2+) is required as a cofactor. The cofactor is K(+).

It localises to the cytoplasm. It carries out the reaction tartrate + NAD(+) = 2-hydroxy-3-oxosuccinate + NADH + H(+). The enzyme catalyses (2R,3S)-tartrate + NAD(+) = 2-hydroxy-3-oxosuccinate + NADH + H(+). The catalysed reaction is (2R,3R)-tartrate + NAD(+) = 2-hydroxy-3-oxosuccinate + NADH + H(+). It catalyses the reaction (2R,3R)-tartrate + H(+) = (R)-glycerate + CO2. It carries out the reaction (R)-malate + NAD(+) = pyruvate + CO2 + NADH. It functions in the pathway carbohydrate acid metabolism; tartrate degradation; 2-hydroxy-3-oxosuccinate from L-tartrate: step 1/1. Its pathway is carbohydrate acid metabolism; tartrate degradation; 2-hydroxy-3-oxosuccinate from meso-tartrate: step 1/1. It participates in carbohydrate acid metabolism; tartrate degradation; D-glycerate from L-tartrate: step 1/1. In terms of biological role, has multiple catalytic activities. Apart from catalyzing the oxidation of (+)-tartrate to oxaloglycolate, also converts meso-tartrate to D-glycerate and catalyzes the oxidative decarboxylation of D-malate to pyruvate. This is Probable tartrate dehydrogenase/decarboxylase TtuC' (ttuC') from Agrobacterium vitis (Rhizobium vitis).